Here is a 778-residue protein sequence, read N- to C-terminus: Subtilisin-like protease SBT5.4 (778 aa).

The signal sequence occupies residues 1–35; it reads MSMTRRYSSTQYSNKMSLQSLSSLLLLVTLFFSPA. One can recognise an Inhibitor I9 domain in the interval 41–126; the sequence is SYIVYLGSHA…VFPNKGRKLH (86 aa). A Peptidase S8 domain is found at 130-634; sequence SWNFMLLAKN…SGHVQPNKAA (505 aa). Asp163 serves as the catalytic Charge relay system. The N-linked (GlcNAc...) asparagine glycan is linked to Asn218. Catalysis depends on His230, which acts as the Charge relay system. N-linked (GlcNAc...) asparagine glycosylation is found at Asn253 and Asn404. Positions 401 to 486 constitute a PA domain; it reads ANGNVTDALL…KDGETLFSYL (86 aa). The Charge relay system role is filled by Ser567. N-linked (GlcNAc...) asparagine glycosylation is found at Asn657, Asn690, and Asn732.

It belongs to the peptidase S8 family. Expressed in the vasculature of roots and leaves, stomata, sepals, stigma, anthers and siliques.

The protein resides in the endoplasmic reticulum. The protein localises to the cell membrane. Functionally, serine protease. Has a substrate preference for the hydrophobic residues Phe and Ala and the basic residue Asp in the P1 position, and for Asp, Leu or Ala in the P1' position. Interferes with CLAVATA 3 (CLV3) signaling, but does not cleave CLV3. The protein is Subtilisin-like protease SBT5.4 of Arabidopsis thaliana (Mouse-ear cress).